Consider the following 192-residue polypeptide: Putative cyclic ADP-D-ribose synthase ThsB1 (192 aa).

It belongs to the Thoeris B TIR-like family. As to quaternary structure, monomer; not seen to interact with ThsA.

The protein localises to the cytoplasm. Activated upon phage infection. In terms of biological role, TIR-like domain-containing component of the Thoeris antiviral defense system, composed of ThsA and ThsB. Expression of ThsA and ThsB in B.subtilis (strain BEST7003) confers resistance to phages SBSphiC, SBSphiJ and SPO1. Phage infection activates this protein so that 30 to 45 minutes post-infection with phage SPO1 it generates a signal molecule that in turn activates the NAD(+) hydrolase activity of ThsA. The signal is similar to cyclic ADP-D-ribose, but how it differs is unknown. In vitro purified (but unactivated) ThsB has no NAD(+) hydrolyzing activity, no activity on AMP, CMP, GMP or UMP, does not alter the activity of ThsA, does not bind DNA. Hydrolyzes NAD(+) to make a cyclic ADP-D-ribose (cADPR) signaling molecule; might make 3'cADPR. This chain is Putative cyclic ADP-D-ribose synthase ThsB1, found in Bacillus cereus (strain MSX-D12).